Here is an 886-residue protein sequence, read N- to C-terminus: Translation initiation factor IF-2 (886 aa).

Disordered regions lie at residues 1 to 25 (MSETKNPGDHTLSVSPTKTLSLKRP), 50 to 229 (RRAL…PAEE), and 253 to 272 (KGAEQKSRGRLTVASATGDE). Over residues 50–60 (RRALGEPHVLR) the composition is skewed to basic and acidic residues. Low complexity predominate over residues 63 to 73 (APALDVVAPAP). Positions 74-83 (QAAPPAPTQQ) are enriched in pro residues. Positions 84 to 106 (PQPRVASRPQPQQRSSSGVILRS) are enriched in low complexity. Residues 107–181 (LTEEEREARS…KRRSESEAKR (75 aa)) are compositionally biased toward basic and acidic residues. Residues 185 to 225 (GGEPAPAGANAAPRKAPALSAAPGSAAPSGQPGPAGAVGAR) show a composition bias toward low complexity. The region spanning 383-553 (SRPPVVTIMG…ALQAELLDLK (171 aa)) is the tr-type G domain. Positions 392 to 399 (GHVDHGKT) are G1. 392-399 (GHVDHGKT) contacts GTP. The interval 417-421 (GITQH) is G2. The interval 439–442 (DTPG) is G3. GTP is bound by residues 439 to 443 (DTPGH) and 493 to 496 (NKID). The G4 stretch occupies residues 493-496 (NKID). Residues 529–531 (SAT) form a G5 region.

It belongs to the TRAFAC class translation factor GTPase superfamily. Classic translation factor GTPase family. IF-2 subfamily.

It localises to the cytoplasm. In terms of biological role, one of the essential components for the initiation of protein synthesis. Protects formylmethionyl-tRNA from spontaneous hydrolysis and promotes its binding to the 30S ribosomal subunits. Also involved in the hydrolysis of GTP during the formation of the 70S ribosomal complex. The chain is Translation initiation factor IF-2 from Methylocella silvestris (strain DSM 15510 / CIP 108128 / LMG 27833 / NCIMB 13906 / BL2).